The primary structure comprises 595 residues: Chaperone protein HscA homolog (595 aa).

It belongs to the heat shock protein 70 family.

Chaperone involved in the maturation of iron-sulfur cluster-containing proteins. Has a low intrinsic ATPase activity which is markedly stimulated by HscB. The polypeptide is Chaperone protein HscA homolog (Rickettsia conorii (strain ATCC VR-613 / Malish 7)).